Reading from the N-terminus, the 245-residue chain is Bis(5'-nucleosyl)-tetraphosphatase PrpE [asymmetrical] (245 aa).

Belongs to the PrpE family. Ni(2+) is required as a cofactor.

The catalysed reaction is P(1),P(4)-bis(5'-guanosyl) tetraphosphate + H2O = GMP + GTP + 2 H(+). In terms of biological role, asymmetrically hydrolyzes Ap4p to yield AMP and ATP. The chain is Bis(5'-nucleosyl)-tetraphosphatase PrpE [asymmetrical] from Geobacillus thermodenitrificans (strain NG80-2).